The chain runs to 240 residues: Expansin-A20 (240 aa).

The signal sequence occupies residues 1-21; that stretch reads MGNILLQLLAVVALCIAPARS. Residues 41 to 145 enclose the Expansin-like EG45 domain; sequence GGACGYGNLY…QQVKCWRYGG (105 aa). 2 N-linked (GlcNAc...) asparagine glycosylation sites follow: Asn-107 and Asn-207. Positions 155-234 constitute an Expansin-like CBD domain; the sequence is YFELVLVTNM…GWSFGQTFST (80 aa).

The protein belongs to the expansin family. Expansin A subfamily.

The protein localises to the secreted. It is found in the cell wall. It localises to the membrane. Its function is as follows. May cause loosening and extension of plant cell walls by disrupting non-covalent bonding between cellulose microfibrils and matrix glucans. No enzymatic activity has been found. May be required for rapid internodal elongation in deepwater rice during submergence. This is Expansin-A20 (EXPA20) from Oryza sativa subsp. japonica (Rice).